Here is a 955-residue protein sequence, read N- to C-terminus: Vacuolar membrane protease (955 aa).

Topologically, residues 1–16 are cytoplasmic; that stretch reads MASLRLPRANPLAFTR. Residues 17-37 form a helical membrane-spanning segment; that stretch reads WPVTVITAIVYLALLIPLLVV. The Vacuolar portion of the chain corresponds to 38 to 390; that stretch reads HHVVPSAPSS…STFVLFQLHT (353 aa). N-linked (GlcNAc...) asparagine glycosylation is found at Asn-53 and Asn-119. Residues His-174 and Asp-186 each contribute to the Zn(2+) site. Glu-220 serves as the catalytic Proton acceptor. Glu-221, Glu-246, and His-319 together coordinate Zn(2+). The helical transmembrane segment at 391–411 threads the bilayer; it reads LFALLVTLLIVGPLTLLFTSI. Topologically, residues 412–442 are cytoplasmic; the sequence is ALTKADKMYLFRSSAKSEDRLDVVPLQGLRG. A helical membrane pass occupies residues 443-463; sequence FFRFPFLFGIPTVVTVGLAYL. Over 464–473 the chain is Vacuolar; it reads VTKVNPYIIH. The helical transmembrane segment at 474-494 threads the bilayer; that stretch reads SSAYAVWSMMVAAWVFLAWFV. Residues 495 to 508 lie on the Cytoplasmic side of the membrane; sequence SRVADFARPSAFHR. Residues 509–529 form a helical membrane-spanning segment; that stretch reads IYTLTWMYVLSWVSAVIATVY. At 530–533 the chain is on the vacuolar side; the sequence is ANQR. The helical transmembrane segment at 534–554 threads the bilayer; the sequence is GLAGGYFIFFFHAGIFLAKWI. Over 555-656 the chain is Cytoplasmic; it reads SYLELFALPS…WSYALPKWTW (102 aa). Residues 574-590 show a composition bias toward low complexity; the sequence is SASGRASGHGSRRGTTS. The disordered stretch occupies residues 574-611; sequence SASGRASGHGSRRGTTSGEDDGEEAEEEPTESTSLLGS. Residues 591 to 603 show a composition bias toward acidic residues; sequence GEDDGEEAEEEPT. A helical membrane pass occupies residues 657 to 677; the sequence is VLQLLLTAPITLIMVGPLALL. At 678–693 the chain is on the vacuolar side; sequence TISAISQTGQDGGHPL. A helical transmembrane segment spans residues 694-714; that stretch reads FAYVAIAIFTTIMLTPLLPFI. Residues 715 to 721 lie on the Cytoplasmic side of the membrane; the sequence is HRYTYHV. The helical transmembrane segment at 722-742 threads the bilayer; sequence PLFLLAVFLGTLIYNLVAFPF. The Vacuolar segment spans residues 743–955; it reads SDSNRLKLYY…RRAFEIGNDD (213 aa). An N-linked (GlcNAc...) asparagine glycan is attached at Asn-826.

Belongs to the peptidase M28 family. Zn(2+) is required as a cofactor.

Its subcellular location is the vacuole membrane. Functionally, may be involved in vacuolar sorting and osmoregulation. The polypeptide is Vacuolar membrane protease (Aspergillus oryzae (strain ATCC 42149 / RIB 40) (Yellow koji mold)).